A 203-amino-acid polypeptide reads, in one-letter code: Thymidylate kinase (203 aa).

Residue 9–16 coordinates ATP; it reads GPEGAGKT.

Belongs to the thymidylate kinase family.

It catalyses the reaction dTMP + ATP = dTDP + ADP. In terms of biological role, phosphorylation of dTMP to form dTDP in both de novo and salvage pathways of dTTP synthesis. This Staphylococcus epidermidis (strain ATCC 35984 / DSM 28319 / BCRC 17069 / CCUG 31568 / BM 3577 / RP62A) protein is Thymidylate kinase.